A 188-amino-acid chain; its full sequence is Multiple organellar RNA editing factor 7, mitochondrial (188 aa).

The N-terminal 20 residues, 1–20 (MARIIRRPLNLTAAVRFRLS), are a transit peptide targeting the mitochondrion. The interval 169-188 (DAKSGVVKKKHRRKRKKKLI) is disordered. Over residues 174 to 188 (VVKKKHRRKRKKKLI) the composition is skewed to basic residues.

Belongs to the MORF family. As to quaternary structure, heterodimers with MORF8/RIP1, MORF5/RIP5 and MORF6/RIP6.

The protein resides in the mitochondrion. Functionally, involved in organellar RNA editing. Required for the processing of few RNA editing sites in mitochondria. In Arabidopsis thaliana (Mouse-ear cress), this protein is Multiple organellar RNA editing factor 7, mitochondrial.